We begin with the raw amino-acid sequence, 339 residues long: uncharacterized protein (339 aa).

The disordered stretch occupies residues 1 to 24 (IQPARRHTKNTNMAKHTTKGTGHS). Positions 10 to 21 (NTNMAKHTTKGT) are enriched in polar residues.

It is found in the mitochondrion. This is an uncharacterized protein from Zea mays (Maize).